The primary structure comprises 416 residues: Putative competence-damage inducible protein (416 aa).

The protein belongs to the CinA family.

This is Putative competence-damage inducible protein from Levilactobacillus brevis (strain ATCC 367 / BCRC 12310 / CIP 105137 / JCM 1170 / LMG 11437 / NCIMB 947 / NCTC 947) (Lactobacillus brevis).